Consider the following 60-residue polypeptide: Naniproin (60 aa).

4 cysteine pairs are disulfide-bonded: cysteine 3–cysteine 21, cysteine 14–cysteine 38, cysteine 42–cysteine 53, and cysteine 54–cysteine 59.

This sequence belongs to the three-finger toxin family. Short-chain subfamily. Type IA cytotoxin sub-subfamily. In terms of assembly, monomer in solution; Homodimer and oligomer in the presence of negatively charged lipids forming a pore with a size ranging between 20 and 30 angstroms. Expressed by the venom gland.

It is found in the secreted. The protein resides in the target cell membrane. Its function is as follows. Basic protein that binds to cell membrane and depolarizes cardiomyocytes. This cytotoxin also possesses lytic activity on many other cells, including red blood cells. Interaction with sulfatides in the cell membrane induces pore formation and cell internalization and is responsible for cytotoxicity in cardiomyocytes. It targets the mitochondrial membrane and induces mitochondrial swelling and fragmentation. Inhibits protein kinases C. It binds to the integrin alpha-V/beta-3 with a moderate affinity. The chain is Naniproin from Naja nigricollis (Black-necked spitting cobra).